Consider the following 393-residue polypeptide: Acetyl-CoA acetyltransferase (393 aa).

The Acyl-thioester intermediate role is filled by Cys-90. Residues His-349 and Cys-379 each act as proton acceptor in the active site.

The protein belongs to the thiolase-like superfamily. Thiolase family. As to quaternary structure, homotetramer.

The protein localises to the cytoplasm. It carries out the reaction 2 acetyl-CoA = acetoacetyl-CoA + CoA. It functions in the pathway biopolymer metabolism; poly-(R)-3-hydroxybutanoate biosynthesis. The protein operates within metabolic intermediate biosynthesis; (R)-mevalonate biosynthesis; (R)-mevalonate from acetyl-CoA: step 1/3. This chain is Acetyl-CoA acetyltransferase, found in Rhizobium meliloti (strain 1021) (Ensifer meliloti).